Reading from the N-terminus, the 123-residue chain is uncharacterized protein (123 aa).

Helical transmembrane passes span 1–21 (MVLP…AVGC) and 103–123 (LESS…ILLF).

The protein localises to the membrane. This is an uncharacterized protein from Saccharomyces cerevisiae (strain ATCC 204508 / S288c) (Baker's yeast).